Reading from the N-terminus, the 256-residue chain is Deoxyribose-phosphate aldolase (256 aa).

The active-site Proton donor/acceptor is the aspartate 102. Residue lysine 165 is the Schiff-base intermediate with acetaldehyde of the active site. Lysine 197 serves as the catalytic Proton donor/acceptor.

This sequence belongs to the DeoC/FbaB aldolase family. DeoC type 2 subfamily.

It localises to the cytoplasm. The enzyme catalyses 2-deoxy-D-ribose 5-phosphate = D-glyceraldehyde 3-phosphate + acetaldehyde. It participates in carbohydrate degradation; 2-deoxy-D-ribose 1-phosphate degradation; D-glyceraldehyde 3-phosphate and acetaldehyde from 2-deoxy-alpha-D-ribose 1-phosphate: step 2/2. Catalyzes a reversible aldol reaction between acetaldehyde and D-glyceraldehyde 3-phosphate to generate 2-deoxy-D-ribose 5-phosphate. The sequence is that of Deoxyribose-phosphate aldolase from Shewanella sp. (strain ANA-3).